The sequence spans 197 residues: uncharacterized protein (197 aa).

The N-terminal stretch at 1–23 (MSARAPKELRLALPPCLLNRTFA) is a signal peptide. Residues Asn19 and Asn26 are each glycosylated (N-linked (GlcNAc...) asparagine). Residues 24–61 (SPNASGSGNTGARGPGAGGSGTCITQVGQQLFQSFSST) are Extracellular-facing. The helical transmembrane segment at 62–82 (LVLIVLVTLIFCLIVLSLSTF) threads the bilayer. Topologically, residues 83 to 197 (HIHKRRMKKR…EGLLQTVVLS (115 aa)) are cytoplasmic. Residues 94 to 179 (MQRAQEEYER…ASSPQGAHAV (86 aa)) are disordered. Composition is skewed to basic and acidic residues over residues 96 to 107 (RAQEEYERDHCS) and 125 to 136 (HAKETRLERQPR). The span at 147-161 (SSSSSSSPGLPCQGP) shows a compositional bias: low complexity. The span at 162–171 (CAPPPPPPAS) shows a compositional bias: pro residues.

The protein resides in the membrane. This is an uncharacterized protein from Pongo abelii (Sumatran orangutan).